Consider the following 544-residue polypeptide: Chaperonin GroEL (544 aa).

Residues 30-33 (TLGP), Lys-51, 87-91 (DGTTT), Gly-415, 480-482 (DAA), and Asp-496 each bind ATP.

This sequence belongs to the chaperonin (HSP60) family. Forms a cylinder of 14 subunits composed of two heptameric rings stacked back-to-back. Interacts with the co-chaperonin GroES.

The protein localises to the cytoplasm. It catalyses the reaction ATP + H2O + a folded polypeptide = ADP + phosphate + an unfolded polypeptide.. Its function is as follows. Together with its co-chaperonin GroES, plays an essential role in assisting protein folding. The GroEL-GroES system forms a nano-cage that allows encapsulation of the non-native substrate proteins and provides a physical environment optimized to promote and accelerate protein folding. This Sulfurihydrogenibium sp. (strain YO3AOP1) protein is Chaperonin GroEL.